The sequence spans 261 residues: Imidazole glycerol phosphate synthase subunit HisF (261 aa).

Active-site residues include Asp-11 and Asp-130.

It belongs to the HisA/HisF family. Heterodimer of HisH and HisF.

It localises to the cytoplasm. The enzyme catalyses 5-[(5-phospho-1-deoxy-D-ribulos-1-ylimino)methylamino]-1-(5-phospho-beta-D-ribosyl)imidazole-4-carboxamide + L-glutamine = D-erythro-1-(imidazol-4-yl)glycerol 3-phosphate + 5-amino-1-(5-phospho-beta-D-ribosyl)imidazole-4-carboxamide + L-glutamate + H(+). Its pathway is amino-acid biosynthesis; L-histidine biosynthesis; L-histidine from 5-phospho-alpha-D-ribose 1-diphosphate: step 5/9. In terms of biological role, IGPS catalyzes the conversion of PRFAR and glutamine to IGP, AICAR and glutamate. The HisF subunit catalyzes the cyclization activity that produces IGP and AICAR from PRFAR using the ammonia provided by the HisH subunit. In Heliobacterium modesticaldum (strain ATCC 51547 / Ice1), this protein is Imidazole glycerol phosphate synthase subunit HisF.